A 119-amino-acid polypeptide reads, in one-letter code: Large ribosomal subunit protein uL18 (119 aa).

It belongs to the universal ribosomal protein uL18 family. In terms of assembly, part of the 50S ribosomal subunit; part of the 5S rRNA/L5/L18/L25 subcomplex. Contacts the 5S and 23S rRNAs.

In terms of biological role, this is one of the proteins that bind and probably mediate the attachment of the 5S RNA into the large ribosomal subunit, where it forms part of the central protuberance. The sequence is that of Large ribosomal subunit protein uL18 from Solibacter usitatus (strain Ellin6076).